The following is a 412-amino-acid chain: Protein MT3510 (412 aa).

Residue Lys-227 is modified to N6-(pyridoxal phosphate)lysine.

The protein belongs to the DegT/DnrJ/EryC1 family.

The protein is Protein MT3510 of Mycobacterium tuberculosis (strain CDC 1551 / Oshkosh).